Here is a 618-residue protein sequence, read N- to C-terminus: Manganese lipoxygenase (618 aa).

The signal sequence occupies residues 1 to 16; the sequence is MRSRILAIVFAARHVA. A compositionally biased stretch (low complexity) spans 36 to 45; sequence SSTTVLPSPT. Residues 36 to 58 form a disordered region; that stretch reads SSTTVLPSPTQYTLPNNDPNQGA. Polar residues predominate over residues 46 to 58; it reads QYTLPNNDPNQGA. Positions 47 to 618 constitute a Lipoxygenase domain; it reads YTLPNNDPNQ…PAVNPFFLSV (572 aa). Residues N60, N91, N106, N116, and N157 are each glycosylated (N-linked (GlcNAc...) asparagine). H290, H294, H478, and N482 together coordinate Mn(2+). N513 carries N-linked (GlcNAc...) asparagine glycosylation. V618 lines the Mn(2+) pocket.

The protein belongs to the lipoxygenase family. Manganese lipoxygenase subfamily. Mn(2+) is required as a cofactor. Post-translationally, N- and O-glycosylated.

The protein resides in the secreted. It carries out the reaction (9Z,12Z)-octadecadienoate + O2 = (11S)-hydroperoxy-(9Z,12Z)-octadecadienoate. It catalyses the reaction (9Z,12Z)-octadecadienoate + O2 = (13R)-hydroperoxy-(9Z,11E)-octadecadienoate. The enzyme catalyses (9Z,12Z,15Z)-octadecatrienoate + O2 = (11S)-hydroperoxy-(9Z,12Z,15Z)-octadecatrienoate. The catalysed reaction is (9Z,12Z,15Z)-octadecatrienoate + O2 = (13R)-hydroperoxy-(9Z,11E,15Z)-octadecatrienoate. In terms of biological role, lipoxygenase that metabolizes linoleic and alpha-linolenic acids to 11S- and 13R-hydroperoxy fatty acids. At the end of lipoxygenation, the intermediate product 11S-HPODE from linoleic acid is then transformed into 13R-HPODE as the final product. It also acts on alpha-linolenic acid producing 11S-HPOTrE and 13R-HPOTrE with subsequent transformation of 11S-HPOTrE to 13R-HPOTrE as final product. The chain is Manganese lipoxygenase from Gaeumannomyces avenae (Oat take-all root rot fungus).